The sequence spans 158 residues: Putative zinc-binding protein ORF9 (158 aa).

The segment at 72–111 (CPVCGRAVVGPTVREACGHVTCNACETEACAVDRLCIGGG) adopts an RING-type; degenerate zinc-finger fold. A disordered region spans residues 126-158 (GPRWRGPRPTRPEAHEAVQRSRGSSEDACTCAP). The span at 135-150 (TRPEAHEAVQRSRGSS) shows a compositional bias: basic and acidic residues.

This Ictalurid herpesvirus 1 (strain Auburn) (IcHV-1) protein is Putative zinc-binding protein ORF9 (ORF9).